Here is a 31-residue protein sequence, read N- to C-terminus: U14-ctenitoxin-Co1c (31 aa).

In terms of tissue distribution, expressed by the venom gland.

It localises to the secreted. In terms of biological role, not toxic to mice by intracerebroventricular injection. This chain is U14-ctenitoxin-Co1c, found in Ctenus ornatus (Brazilian spider).